The sequence spans 406 residues: MLLLQFSNMVEPTGPAIVEDERTKALNSYRRKLAECRDIEQKLKDLRKKESEMTKQFDKSENDIKSLQSVGQIVGEVLKQLSEEKFIVKATNGPRYVVGCRRSINKEELKQGTRVSLDMTTLTIMRQLPREVDPLVYKMSHEDPGNISYSDVGGLAEQIRELREVVELPLINPELFKRVGITPPKGCLLFGPPGTGKTLLARAVASQLDCNFLKVVSSAIVDKYIGESARMIREMFNYARDHQPCIVFMDEIDAIGGRRFSEGTSADREIQRTLMELLNQLDGFDSLGKVKVIMATNRPDTLDPALLRPGRLDRKIEIGLPNEQSRLEILKIHSNKITKHGEIDFEAVVKLSDGFSAADLRNVCTEAGMFAIRAEREFVIDEDFMKAVRKVGDAKRLETKLDYKPV.

An ATP-binding site is contributed by 191–198 (GPPGTGKT).

Belongs to the AAA ATPase family.

It is found in the cytoplasm. The protein resides in the nucleus. The 26S proteasome is involved in the ATP-dependent degradation of ubiquitinated proteins. The regulatory (or ATPase) complex confers ATP dependency and substrate specificity to the 26S complex. The sequence is that of Probable 26S proteasome regulatory subunit 10B (rpt-4) from Caenorhabditis elegans.